A 407-amino-acid chain; its full sequence is 1-deoxy-D-xylulose 5-phosphate reductoisomerase (407 aa).

Positions 10, 11, 12, 13, 36, and 131 each coordinate NADPH. Position 132 (Lys-132) interacts with 1-deoxy-D-xylulose 5-phosphate. Glu-133 contributes to the NADPH binding site. A Mn(2+)-binding site is contributed by Asp-155. Residues Ser-156, Glu-157, Ser-181, and His-204 each coordinate 1-deoxy-D-xylulose 5-phosphate. Glu-157 lines the Mn(2+) pocket. Residue Gly-210 participates in NADPH binding. 1-deoxy-D-xylulose 5-phosphate is bound by residues Ser-217, Asn-222, Lys-223, and Glu-226. Residue Glu-226 coordinates Mn(2+).

This sequence belongs to the DXR family. Requires Mg(2+) as cofactor. The cofactor is Mn(2+).

It catalyses the reaction 2-C-methyl-D-erythritol 4-phosphate + NADP(+) = 1-deoxy-D-xylulose 5-phosphate + NADPH + H(+). It participates in isoprenoid biosynthesis; isopentenyl diphosphate biosynthesis via DXP pathway; isopentenyl diphosphate from 1-deoxy-D-xylulose 5-phosphate: step 1/6. Its function is as follows. Catalyzes the NADPH-dependent rearrangement and reduction of 1-deoxy-D-xylulose-5-phosphate (DXP) to 2-C-methyl-D-erythritol 4-phosphate (MEP). The polypeptide is 1-deoxy-D-xylulose 5-phosphate reductoisomerase (Cutibacterium acnes (strain DSM 16379 / KPA171202) (Propionibacterium acnes)).